Consider the following 270-residue polypeptide: 4-hydroxy-tetrahydrodipicolinate reductase (270 aa).

NAD(+) is bound by residues 8–13 (GALGRM), Asp-34, 102–104 (GTT), and 128–131 (SQNY). His-160 functions as the Proton donor/acceptor in the catalytic mechanism. His-161 contacts (S)-2,3,4,5-tetrahydrodipicolinate. Residue Lys-164 is the Proton donor of the active site. Residue 170-171 (GT) participates in (S)-2,3,4,5-tetrahydrodipicolinate binding.

The protein belongs to the DapB family.

It is found in the cytoplasm. The catalysed reaction is (S)-2,3,4,5-tetrahydrodipicolinate + NAD(+) + H2O = (2S,4S)-4-hydroxy-2,3,4,5-tetrahydrodipicolinate + NADH + H(+). It carries out the reaction (S)-2,3,4,5-tetrahydrodipicolinate + NADP(+) + H2O = (2S,4S)-4-hydroxy-2,3,4,5-tetrahydrodipicolinate + NADPH + H(+). It participates in amino-acid biosynthesis; L-lysine biosynthesis via DAP pathway; (S)-tetrahydrodipicolinate from L-aspartate: step 4/4. Catalyzes the conversion of 4-hydroxy-tetrahydrodipicolinate (HTPA) to tetrahydrodipicolinate. The polypeptide is 4-hydroxy-tetrahydrodipicolinate reductase (Methanococcus maripaludis (strain C7 / ATCC BAA-1331)).